The sequence spans 446 residues: Calcium-binding and coiled-coil domain-containing protein 2 (446 aa).

Residues 133–136 carry the CLIR motif; it reads ILVV. The stretch at 137 to 349 forms a coiled coil; it reads TTQGEVEEIE…RENSRLLSYM (213 aa). The short motif at 203–206 is the LIR-like element; it reads DYWE. An interaction with LGALS8 region spans residues 371–381; the sequence is NPGLVYGNPYS. The interval 395-446 is interaction with MYO6; the sequence is KKCPICKADDICDHILEQQQMQPLCLNCPICDKIFPATEKQIFEDHVFCHSL. The segment at 419-444 adopts a UBZ1-type zinc-finger fold; sequence CLNCPICDKIFPATEKQIFEDHVFCH. Positions 422, 425, 440, and 444 each coordinate Zn(2+). Serine 445 bears the Phosphoserine mark.

The protein belongs to the CALCOCO family. Dimer. Part of a complex consisting of CALCOCO2, TAX1BP1 and MYO6. Interacts with MYO6. Interacts with GEMIN4. Interacts with ATG8 family members MAP1LC3A, MAP1LC3B, GABARAP, GABARAPL1 and GABARAPL2. Interacts with ATG8 family member MAP1LC3C. Interacts with LGALS8. Interacts with TOM1; the interaction is indirect and is mediated by MYO6, which acts as a bridge between TOM1 and CALCOCO2. Interacts with AZI2.

It localises to the cytoplasm. Its subcellular location is the perinuclear region. The protein localises to the cytoskeleton. It is found in the cytoplasmic vesicle. The protein resides in the autophagosome membrane. Functionally, xenophagy-specific receptor required for autophagy-mediated intracellular bacteria degradation. Acts as an effector protein of galectin-sensed membrane damage that restricts the proliferation of infecting pathogens upon entry into the cytosol by targeting LGALS8-associated bacteria for autophagy. Initially orchestrates bacteria targeting to autophagosomes and subsequently ensures pathogen degradation by regulating pathogen-containing autophagosome maturation. Bacteria targeting to autophagosomes relies on its interaction with MAP1LC3A, MAP1LC3B and/or GABARAPL2, whereas regulation of pathogen-containing autophagosome maturation requires the interaction with MAP3LC3C. May play a role in ruffle formation and actin cytoskeleton organization and seems to negatively regulate constitutive secretion. The polypeptide is Calcium-binding and coiled-coil domain-containing protein 2 (Pongo abelii (Sumatran orangutan)).